Consider the following 241-residue polypeptide: Protein-L-isoaspartate O-methyltransferase (241 aa).

Residue Ser69 is part of the active site.

The protein belongs to the methyltransferase superfamily. L-isoaspartyl/D-aspartyl protein methyltransferase family.

The protein resides in the cytoplasm. It carries out the reaction [protein]-L-isoaspartate + S-adenosyl-L-methionine = [protein]-L-isoaspartate alpha-methyl ester + S-adenosyl-L-homocysteine. In terms of biological role, catalyzes the methyl esterification of L-isoaspartyl residues in peptides and proteins that result from spontaneous decomposition of normal L-aspartyl and L-asparaginyl residues. It plays a role in the repair and/or degradation of damaged proteins. The sequence is that of Protein-L-isoaspartate O-methyltransferase from Hyperthermus butylicus (strain DSM 5456 / JCM 9403 / PLM1-5).